A 322-amino-acid chain; its full sequence is p55-v-Fos-transforming protein (322 aa).

Positions 69–95 (APGGRGQSIGRRGKVEQLSPEEEEKRR) are disordered. The 64-residue stretch at 91 to 154 (EEKRRIRRER…EKLEFILAAH (64 aa)) folds into the bZIP domain. Residues 93–113 (KRRIRRERNKMAAAKCRNRRR) form a basic motif region. The interval 119 to 147 (LQAETDQLEEEKSALQAEIANLLKEKEKL) is leucine-zipper. Residues 298–322 (AAHRKGSSSNEPSSDSLSSPTLLAL) are disordered. Positions 304–316 (SSSNEPSSDSLSS) are enriched in low complexity.

The protein belongs to the bZIP family. Fos subfamily.

It is found in the host nucleus. The protein is p55-v-Fos-transforming protein (V-FOS) of Galliformes.